Reading from the N-terminus, the 311-residue chain is Aspartate carbamoyltransferase catalytic subunit (311 aa).

R58 and T59 together coordinate carbamoyl phosphate. K86 contacts L-aspartate. R108, H136, and Q139 together coordinate carbamoyl phosphate. L-aspartate-binding residues include R169 and R224. Residues G265 and P266 each coordinate carbamoyl phosphate.

It belongs to the aspartate/ornithine carbamoyltransferase superfamily. ATCase family. In terms of assembly, heterododecamer (2C3:3R2) of six catalytic PyrB chains organized as two trimers (C3), and six regulatory PyrI chains organized as three dimers (R2).

The enzyme catalyses carbamoyl phosphate + L-aspartate = N-carbamoyl-L-aspartate + phosphate + H(+). The protein operates within pyrimidine metabolism; UMP biosynthesis via de novo pathway; (S)-dihydroorotate from bicarbonate: step 2/3. Its function is as follows. Catalyzes the condensation of carbamoyl phosphate and aspartate to form carbamoyl aspartate and inorganic phosphate, the committed step in the de novo pyrimidine nucleotide biosynthesis pathway. This is Aspartate carbamoyltransferase catalytic subunit from Geobacter sulfurreducens (strain ATCC 51573 / DSM 12127 / PCA).